Consider the following 443-residue polypeptide: Threonine/serine transporter TdcC (443 aa).

11 consecutive transmembrane segments (helical) span residues 22–42 (TTWTLGLFGTAIGAGVLFFPI), 44–64 (AGFGGLIPILLMLVLAYPIAF), 97–117 (GVVITFLYFFAICPLLWIYGV), 140–160 (FVALFLLLLMAFVIWFGKDLM), 163–183 (VMSFLVFPFIASLILISLSLI), 207–227 (ILVTVWLGISIMVFSFNFSPI), 259–279 (ASLLMVAVVMFFAFSCLFTLS), 319–339 (ASIIALVAIFKSFFGHYLGTL), 366–386 (ISMIFIMGSTWVVAYANPNIL), 389–409 (IEAMGAPIIASLLCLLPMFAI), and 423–443 (ENLFVTAVGLLTILNIVYKLF).

Belongs to the amino acid/polyamine transporter 2 family. SdaC/TdcC subfamily.

The protein localises to the cell inner membrane. It carries out the reaction L-threonine(in) + H(+)(in) = L-threonine(out) + H(+)(out). The enzyme catalyses L-serine(in) + H(+)(in) = L-serine(out) + H(+)(out). Involved in the import of threonine and serine into the cell, with the concomitant import of a proton (symport system). The protein is Threonine/serine transporter TdcC of Enterobacter sp. (strain 638).